A 117-amino-acid chain; its full sequence is Immunoglobulin lambda variable 10-54 (117 aa).

The N-terminal stretch at methionine 1–alanine 21 is a signal peptide. The tract at residues glutamine 20–glycine 43 is framework-1. One can recognise an Ig-like domain in the interval glycine 22–alanine 117. Cysteine 41 and cysteine 108 are joined by a disulfide. The segment at asparagine 44–glycine 52 is complementarity-determining-1. Residues alanine 53–tyrosine 69 form a framework-2 region. Positions arginine 70–asparagine 72 are complementarity-determining-2. The segment at asparagine 73–cysteine 108 is framework-3. The tract at residues serine 109–alanine 117 is complementarity-determining-3.

As to quaternary structure, immunoglobulins are composed of two identical heavy chains and two identical light chains; disulfide-linked.

Its subcellular location is the secreted. It is found in the cell membrane. In terms of biological role, v region of the variable domain of immunoglobulin light chains that participates in the antigen recognition. Immunoglobulins, also known as antibodies, are membrane-bound or secreted glycoproteins produced by B lymphocytes. In the recognition phase of humoral immunity, the membrane-bound immunoglobulins serve as receptors which, upon binding of a specific antigen, trigger the clonal expansion and differentiation of B lymphocytes into immunoglobulins-secreting plasma cells. Secreted immunoglobulins mediate the effector phase of humoral immunity, which results in the elimination of bound antigens. The antigen binding site is formed by the variable domain of one heavy chain, together with that of its associated light chain. Thus, each immunoglobulin has two antigen binding sites with remarkable affinity for a particular antigen. The variable domains are assembled by a process called V-(D)-J rearrangement and can then be subjected to somatic hypermutations which, after exposure to antigen and selection, allow affinity maturation for a particular antigen. This chain is Immunoglobulin lambda variable 10-54, found in Homo sapiens (Human).